We begin with the raw amino-acid sequence, 315 residues long: Cytochrome bo(3) ubiquinol oxidase subunit 2 (315 aa).

The first 24 residues, 1 to 24, serve as a signal peptide directing secretion; that stretch reads MRLRKYNKSLGWLSLFAGTVLLSG. Residue cysteine 25 is the site of N-palmitoyl cysteine attachment. A lipid anchor (S-diacylglycerol cysteine) is attached at cysteine 25. Topologically, residues 25–50 are periplasmic; it reads CNSALLDPKGQIGLEQRSLILTAFGL. A helical membrane pass occupies residues 51 to 68; that stretch reads MLIVVIPAILMAVGFAWK. At 69–92 the chain is on the cytoplasmic side; the sequence is YRASNKDAKYSPNWSHSNKVEAVV. Residues 93–111 traverse the membrane as a helical segment; it reads WTVPILIIIFLAVLTWKTT. The Periplasmic segment spans residues 112-315; the sequence is HALEPSKPLA…MDMSHAESAH (204 aa). A disordered region spans residues 288–315; the sequence is MDMTQPEGEHSAHEGMEGMDMSHAESAH. The segment covering 294–315 has biased composition (basic and acidic residues); it reads EGEHSAHEGMEGMDMSHAESAH.

It belongs to the cytochrome c oxidase subunit 2 family. Heterooctamer of two A chains, two B chains, two C chains and two D chains.

It localises to the cell inner membrane. Functionally, cytochrome bo(3) ubiquinol terminal oxidase is the component of the aerobic respiratory chain of E.coli that predominates when cells are grown at high aeration. Has proton pump activity across the membrane in addition to electron transfer, pumping 2 protons/electron. The sequence is that of Cytochrome bo(3) ubiquinol oxidase subunit 2 (cyoA) from Escherichia coli O6:H1 (strain CFT073 / ATCC 700928 / UPEC).